Reading from the N-terminus, the 921-residue chain is Isoleucine--tRNA ligase (921 aa).

The 'HIGH' region motif lies at 59 to 69 (PYANGHLHIGH). An L-isoleucyl-5'-AMP-binding site is contributed by Glu-569. A 'KMSKS' region motif is present at residues 610 to 614 (KMSKS). Lys-613 is a binding site for ATP. The Zn(2+) site is built by Cys-896, Cys-899, Cys-911, and Cys-914.

Belongs to the class-I aminoacyl-tRNA synthetase family. IleS type 1 subfamily. As to quaternary structure, monomer. Zn(2+) is required as a cofactor.

It is found in the cytoplasm. It carries out the reaction tRNA(Ile) + L-isoleucine + ATP = L-isoleucyl-tRNA(Ile) + AMP + diphosphate. Functionally, catalyzes the attachment of isoleucine to tRNA(Ile). As IleRS can inadvertently accommodate and process structurally similar amino acids such as valine, to avoid such errors it has two additional distinct tRNA(Ile)-dependent editing activities. One activity is designated as 'pretransfer' editing and involves the hydrolysis of activated Val-AMP. The other activity is designated 'posttransfer' editing and involves deacylation of mischarged Val-tRNA(Ile). This is Isoleucine--tRNA ligase from Campylobacter hominis (strain ATCC BAA-381 / DSM 21671 / CCUG 45161 / LMG 19568 / NCTC 13146 / CH001A).